A 1025-amino-acid chain; its full sequence is AP-2 complex subunit alpha (1025 aa).

Residues 713–737 (RSIMVPMPPPSRRNTIDDVNSKISS) are disordered. Thr-727 bears the Phosphothreonine mark. Ser-733 carries the phosphoserine modification.

The protein belongs to the adaptor complexes large subunit family. Adaptor protein complex 2 (AP-2) is a heterotetramer composed of two large adaptins (alpha-type subunit APL3 and beta-type subunit APL1), a medium chain (mu-type subunit APM4) and a small adaptin (sigma-type subunit APS2).

It is found in the cell membrane. Its subcellular location is the membrane. The protein resides in the coated pit. Its function is as follows. Adaptins are components of the adaptor complexes which link clathrin to receptors in coated vesicles. Clathrin-associated protein complexes are believed to interact with the cytoplasmic tails of membrane proteins, leading to their selection and concentration. Alpha adaptin is a subunit of the plasma membrane adaptor. Facilitates interaction between APL1 and APS2. In Saccharomyces cerevisiae (strain ATCC 204508 / S288c) (Baker's yeast), this protein is AP-2 complex subunit alpha (APL3).